We begin with the raw amino-acid sequence, 247 residues long: Probable transcriptional regulatory protein YPK_2146 (247 aa).

This sequence belongs to the TACO1 family.

It localises to the cytoplasm. The chain is Probable transcriptional regulatory protein YPK_2146 from Yersinia pseudotuberculosis serotype O:3 (strain YPIII).